The primary structure comprises 362 residues: Talin rod domain-containing protein 1 (362 aa).

The disordered stretch occupies residues 1–26; that stretch reads MASGSAGKPTGEAASPAPASAIGGAS. Alanine 2 is subject to N-acetylalanine. A compositionally biased stretch (low complexity) spans 13-26; it reads AASPAPASAIGGAS.

May homodimerize. Interacts with F-actin.

Its function is as follows. Actin-binding protein which may have an oncogenic function and regulates cell proliferation, migration and invasion in cancer cells. In Homo sapiens (Human), this protein is Talin rod domain-containing protein 1.